The following is a 249-amino-acid chain: Ubiquinone biosynthesis O-methyltransferase (249 aa).

Positions 1–23 (MTSPSQVLPASAGKPTGPNADPK) are disordered. Residues R52, G71, D92, and M136 each coordinate S-adenosyl-L-methionine.

The protein belongs to the methyltransferase superfamily. UbiG/COQ3 family.

It catalyses the reaction a 3-demethylubiquinol + S-adenosyl-L-methionine = a ubiquinol + S-adenosyl-L-homocysteine + H(+). It carries out the reaction a 3-(all-trans-polyprenyl)benzene-1,2-diol + S-adenosyl-L-methionine = a 2-methoxy-6-(all-trans-polyprenyl)phenol + S-adenosyl-L-homocysteine + H(+). It functions in the pathway cofactor biosynthesis; ubiquinone biosynthesis. Its function is as follows. O-methyltransferase that catalyzes the 2 O-methylation steps in the ubiquinone biosynthetic pathway. In Cupriavidus pinatubonensis (strain JMP 134 / LMG 1197) (Cupriavidus necator (strain JMP 134)), this protein is Ubiquinone biosynthesis O-methyltransferase.